A 394-amino-acid polypeptide reads, in one-letter code: Elongation factor Tu (394 aa).

In terms of domain architecture, tr-type G spans 10–204 (KPHVNVGTIG…HLDSYIPEPE (195 aa)). The G1 stretch occupies residues 19–26 (GHVDHGKT). Residue 19 to 26 (GHVDHGKT) coordinates GTP. Thr26 serves as a coordination point for Mg(2+). Residues 60–64 (GITIN) are G2. The segment at 81-84 (DCPG) is G3. GTP-binding positions include 81-85 (DCPGH) and 136-139 (NKCD). The tract at residues 136-139 (NKCD) is G4. Residues 174 to 176 (SAL) form a G5 region.

It belongs to the TRAFAC class translation factor GTPase superfamily. Classic translation factor GTPase family. EF-Tu/EF-1A subfamily. In terms of assembly, monomer.

The protein resides in the cytoplasm. The enzyme catalyses GTP + H2O = GDP + phosphate + H(+). GTP hydrolase that promotes the GTP-dependent binding of aminoacyl-tRNA to the A-site of ribosomes during protein biosynthesis. This chain is Elongation factor Tu, found in Cronobacter sakazakii (strain ATCC BAA-894) (Enterobacter sakazakii).